The primary structure comprises 247 residues: Cobalt transport protein CbiM (247 aa).

The signal sequence occupies residues 1–21; it reads MVGWGVLILLMVLWLPRQAYA. 7 consecutive transmembrane segments (helical) span residues 27–47, 64–84, 96–116, 119–139, 159–179, 181–201, and 202–222; these read GYLP…ALIL, LVLA…LPSV, LGAV…ILLF, LLLA…MAVV, GVAV…TTSL, LALA…KFAS, and IFAV…VIMV.

It belongs to the CbiM family. Forms an energy-coupling factor (ECF) transporter complex composed of an ATP-binding protein (A component, CbiO), a transmembrane protein (T component, CbiQ) and 2 possible substrate-capture proteins (S components, CbiM and CbiN) of unknown stoichimetry.

It localises to the cell membrane. Its pathway is cofactor biosynthesis; adenosylcobalamin biosynthesis. In terms of biological role, part of the energy-coupling factor (ECF) transporter complex CbiMNOQ involved in cobalt import. This chain is Cobalt transport protein CbiM, found in Kyrpidia tusciae (strain DSM 2912 / NBRC 15312 / T2) (Bacillus tusciae).